Here is a 342-residue protein sequence, read N- to C-terminus: Inositol-tetrakisphosphate 1-kinase 1 (342 aa).

1D-myo-inositol 6-phosphate contacts are provided by Lys28 and Lys70. Residues Arg105 and Lys155 each contribute to the ATP site. The ATP-grasp domain maps to 116 to 332 (DHAADQDSTF…HKDGVGNQQE (217 aa)). 1D-myo-inositol 6-phosphate-binding residues include Gly161 and His166. Residues His166, Gln187, and Val190 each coordinate ATP. Residues Lys198 and Tyr200 each coordinate 1D-myo-inositol 6-phosphate. An ATP-binding site is contributed by Ser213. The segment at 219 to 247 (PEDDASAQGSVSFSQVSNLPTERTAEEYY) is catalytic specificity elements (CSE). 1D-myo-inositol 6-phosphate is bound at residue Asn280. Asp282 contributes to the Mg(2+) binding site. ATP contacts are provided by Ile296, Asp297, and Asn299. Residues Asp297 and Asn299 each coordinate Mg(2+). 3 residues coordinate 1D-myo-inositol 6-phosphate: Asn299, Gly303, and Lys306.

It belongs to the ITPK1 family. As to quaternary structure, monomer. Requires Mg(2+) as cofactor. Expressed in the embryo of 15 day after pollination. Expressed in kernels at earlier stages but at very low levels. Expression in the embryo peaks at 15 days after pollination and then declines. No expression is detected from endosperm and vegetative tissues.

It carries out the reaction 1D-myo-inositol 3,4,5,6-tetrakisphosphate + ATP = 1D-myo-inositol 1,3,4,5,6-pentakisphosphate + ADP + H(+). The catalysed reaction is 1D-myo-inositol 1,3,4-trisphosphate + ATP = 1D-myo-inositol 1,3,4,5-tetrakisphosphate + ADP + H(+). It catalyses the reaction 1D-myo-inositol 1,3,4-trisphosphate + ATP = 1D-myo-inositol 1,3,4,6-tetrakisphosphate + ADP + H(+). The enzyme catalyses 1D-myo-inositol 1,2,3,4,5-pentakisphosphate + ATP = 3-diphospho-1D-myo-inositol 1,2,4,5-tetrakisphosphate + ADP. It carries out the reaction 1D-myo-inositol hexakisphosphate + ATP = 5-diphospho-1D-myo-inositol 1,2,3,4,6-pentakisphosphate + ADP. Functionally, kinase that can phosphorylate various inositol polyphosphate such as Ins(3,4,5,6)P4 or Ins(1,3,4)P3 and participates in phytic acid biosynthesis in developing seeds. Phosphorylates Ins(3,4,5,6)P4 at position 1 to form Ins(1,3,4,5,6)P5. This reaction is thought to have regulatory importance, since Ins(3,4,5,6)P4 is an inhibitor of plasma membrane Ca(2+)-activated Cl(-) channels, while Ins(1,3,4,5,6)P5 is not. Also phosphorylates Ins(1,3,4)P3 on O-5 and O-6 to form Ins(1,3,4,6)P4, an essential molecule in the hexakisphosphate (InsP6) pathway. Also able to phosphorylate Ins(3,5,6)P3 but not Ins(1,4,5)P3, Ins(2,4,5)P3, Ins(1,3,4,6)P4 nor Ins(1,3,5,6)P4. Has higher specific activity on Ins(3,4,5,6)P4 than Ins(1,3,4)P3 and Ins(3,5,6)P3. Can also could use Ins(1,2,5,6)P4 as a substrate. Able to add a beta-phosphate to the 3 positions of Ins(1,2,3,4,5)P5 and to add beta-phosphate to InsP6 to yield 5-InsP7, thus exhibiting InsP6 kinase activity. Also has Ins(1,3,4,5,6)P5 phosphatase activity. The polypeptide is Inositol-tetrakisphosphate 1-kinase 1 (Zea mays (Maize)).